Here is a 968-residue protein sequence, read N- to C-terminus: RNA polymerase-associated protein RapA (968 aa).

The Helicase ATP-binding domain occupies 164–334 (DVGRRHAPRV…FARLRLLDPN (171 aa)). 177–184 (DEVGLGKT) is a binding site for ATP. Residues 280-283 (DEAH) carry the DEAH box motif. A Helicase C-terminal domain is found at 490 to 662 (RVEWLMGYLT…YLASPDQTEG (173 aa)).

The protein belongs to the SNF2/RAD54 helicase family. RapA subfamily. Interacts with the RNAP. Has a higher affinity for the core RNAP than for the holoenzyme. Its ATPase activity is stimulated by binding to RNAP.

In terms of biological role, transcription regulator that activates transcription by stimulating RNA polymerase (RNAP) recycling in case of stress conditions such as supercoiled DNA or high salt concentrations. Probably acts by releasing the RNAP, when it is trapped or immobilized on tightly supercoiled DNA. Does not activate transcription on linear DNA. Probably not involved in DNA repair. This chain is RNA polymerase-associated protein RapA, found in Escherichia coli O1:K1 / APEC.